A 202-amino-acid polypeptide reads, in one-letter code: Small ribosomal subunit protein uS4c (202 aa).

One can recognise an S4 RNA-binding domain in the interval 89–152 (MRLDNIIFRL…QSNTFINNCI (64 aa)).

Belongs to the universal ribosomal protein uS4 family. Part of the 30S ribosomal subunit. Contacts protein S5. The interaction surface between S4 and S5 is involved in control of translational fidelity.

It is found in the plastid. One of the primary rRNA binding proteins, it binds directly to 16S rRNA where it nucleates assembly of the body of the 30S subunit. Its function is as follows. With S5 and S12 plays an important role in translational accuracy. In Epifagus virginiana (Beechdrops), this protein is Small ribosomal subunit protein uS4c (rps4).